Consider the following 433-residue polypeptide: Gamma-glutamyl phosphate reductase (433 aa).

Belongs to the gamma-glutamyl phosphate reductase family.

Its subcellular location is the cytoplasm. It catalyses the reaction L-glutamate 5-semialdehyde + phosphate + NADP(+) = L-glutamyl 5-phosphate + NADPH + H(+). The protein operates within amino-acid biosynthesis; L-proline biosynthesis; L-glutamate 5-semialdehyde from L-glutamate: step 2/2. Catalyzes the NADPH-dependent reduction of L-glutamate 5-phosphate into L-glutamate 5-semialdehyde and phosphate. The product spontaneously undergoes cyclization to form 1-pyrroline-5-carboxylate. This is Gamma-glutamyl phosphate reductase from Cyanothece sp. (strain PCC 7425 / ATCC 29141).